A 246-amino-acid chain; its full sequence is NAD-dependent protein deacylase (246 aa).

The 245-residue stretch at 1-245 folds into the Deacetylase sirtuin-type domain; the sequence is MKEFITKHRD…ELIREILDNP (245 aa). NAD(+) is bound at residue 20 to 39; the sequence is GAGISAESGIPTFRGSEGLW. The substrate site is built by Tyr64 and Arg67. 98 to 101 is a binding site for NAD(+); the sequence is QNVD. His116 (proton acceptor) is an active-site residue. The Zn(2+) site is built by Cys124, Cys127, Cys146, and Cys149. Residues 186–188, 212–214, and Thr230 contribute to the NAD(+) site; these read GTS and NPE.

The protein belongs to the sirtuin family. Class III subfamily. It depends on Zn(2+) as a cofactor.

Its subcellular location is the cytoplasm. The enzyme catalyses N(6)-acetyl-L-lysyl-[protein] + NAD(+) + H2O = 2''-O-acetyl-ADP-D-ribose + nicotinamide + L-lysyl-[protein]. It carries out the reaction N(6)-succinyl-L-lysyl-[protein] + NAD(+) + H2O = 2''-O-succinyl-ADP-D-ribose + nicotinamide + L-lysyl-[protein]. NAD-dependent lysine deacetylase and desuccinylase that specifically removes acetyl and succinyl groups on target proteins. Modulates the activities of several proteins which are inactive in their acylated form. The protein is NAD-dependent protein deacylase of Leptospira interrogans serogroup Icterohaemorrhagiae serovar Lai (strain 56601).